Consider the following 258-residue polypeptide: MSFDIHWSNLESDTRLNESIKNHLNTYLESISLPSYVCNLRILDFSLGKTAPNITLREISDPLDELYRGLNEDEPDSITPSPNDIQFLVEVEYKGDLLVTLAADLVLNYPSDNFMTLPVKLTISNVGLHSLCLVAHLSKHLLISFLCDISDVDLDGNESLLDPKGHVLSPRRSLERISIIRNMKIETEIGQQHSGEGSVLRSVGRLEQFLLEIFKDLLRKEVSWPSWIELDFNDDNEEDLQQSKDTPTTANTGTTTTN.

The SMP-LTD domain maps to 1-233; sequence MSFDIHWSNL…WPSWIELDFN (233 aa). A disordered region spans residues 238-258; sequence EDLQQSKDTPTTANTGTTTTN. Residues 246–258 show a composition bias toward low complexity; it reads TPTTANTGTTTTN.

This sequence belongs to the MDM12 family. As to quaternary structure, component of the ER-mitochondria encounter structure (ERMES) or MDM complex, composed of MMM1, MDM10, MDM12 and MDM34. An MMM1 homodimer associates with one molecule of MDM12 on each side in a pairwise head-to-tail manner, and the SMP-LTD domains of MMM1 and MDM12 generate a continuous hydrophobic tunnel for phospholipid trafficking.

It is found in the mitochondrion outer membrane. It localises to the endoplasmic reticulum membrane. In terms of biological role, component of the ERMES/MDM complex, which serves as a molecular tether to connect the endoplasmic reticulum (ER) and mitochondria. Components of this complex are involved in the control of mitochondrial shape and protein biogenesis, and function in nonvesicular lipid trafficking between the ER and mitochondria. MDM12 is required for the interaction of the ER-resident membrane protein MMM1 and the outer mitochondrial membrane-resident beta-barrel protein MDM10. The MDM12-MMM1 subcomplex functions in the major beta-barrel assembly pathway that is responsible for biogenesis of all mitochondrial outer membrane beta-barrel proteins, and acts in a late step after the SAM complex. The MDM10-MDM12-MMM1 subcomplex further acts in the TOM40-specific pathway after the action of the MDM12-MMM1 complex. Essential for establishing and maintaining the structure of mitochondria and maintenance of mtDNA nucleoids. This is Mitochondrial distribution and morphology protein 12 from Zygosaccharomyces rouxii (strain ATCC 2623 / CBS 732 / NBRC 1130 / NCYC 568 / NRRL Y-229).